Consider the following 447-residue polypeptide: NAC domain containing protein 50 (447 aa).

The disordered stretch occupies residues 1–21; sequence MGRESLAVVSSPPSATAPSTA. Positions 27–178 constitute an NAC domain; sequence LAPGFRFHPT…AYVLCRVFHK (152 aa). The DNA-binding element occupies 126–184; sequence LGMKKTLVFHSGRAPDGLRTNWVMHEYRLVEYETETNGSLLQDAYVLCRVFHKNNIGPP. Disordered regions lie at residues 246–303 and 371–392; these read DATP…NKEA and KENQ…EEKV. Positions 281–293 are enriched in basic and acidic residues; it reads TLKREHAEEDERP. Positions 392–447 form a coiled coil; it reads VNDLQKEVHQMSVERETFKLEMMSAEAMISILQSRIDALRQENEELKKKNASGQAS.

Interacts with JMJ14 and NAC052. As to expression, mostly expressed in floral organs, and, at low levels, in other organs.

The protein resides in the nucleus. Its function is as follows. Transcriptional repressor that binds to the motif 5'-(C/T)A(C/A)G-3' in the promoter of target genes. Also binds to the 5'-CTTGNNNNNCAAG-3' consensus sequence in chromatin. Can bind to the mitochondrial dysfunction motif (MDM) present in the upstream regions of mitochondrial dysfunction stimulon (MDS) genes involved in mitochondrial retrograde regulation (MRR). Together with NAC051/NAC052 and JMJ14, regulates gene expression and flowering time by associating with the histone demethylase JMJ14, probably by the promotion of RNA-mediated gene silencing. This chain is NAC domain containing protein 50, found in Arabidopsis thaliana (Mouse-ear cress).